A 583-amino-acid polypeptide reads, in one-letter code: MPKPINVRVTTMDAELEFAIQPNTTGKQLFDQVVKTVGLREVWFFGLQYVDSKGYSTWLKLNKKVTQQDVKKENPLQFKFRAKFFPEDVSEELIQEITQRLFFLQVKEAILNDEIYCPPETAVLLASYAVQAKYGDYNKEIHKPGYLANDRLLPQRVLEQHKLTKEQWEERIQNWHEEHRGMLREDSMMEYLKIAQDLEMYGVNYFEIKNKKGTELWLGVDALGLNIYEHDDKLTPKIGFPWSEIRNISFNDKKFVIKPIDKKAPDFVFYAPRLRINKRILALCMGNHELYMRRRKPDTIEVQQMKAQAREEKHQKQLERAQLENEKKKREIAEKEKERIEREKEELMERLKQIEEQTIKAQKELEEQTRKALELDQERKRAKEEAERLEKERRAAEEAKSAIAKQAADQMKNQEQLAAELAEFTAKIALLEEAKKKKEEEATEWQHKAFAAQEDLEKTKEELKTVMSAPPPPPPPPVIPPTENEHDEHDENNAEASAELSNEGVMNHRSEEERVTETQKNERVKKQLQALSSELAQARDETKKTQNDVLHAENVKAGRDKYKTLRQIRQGNTKQRIDEFEAM.

The FERM domain maps to 5-295; it reads INVRVTTMDA…GNHELYMRRR (291 aa). 60 to 63 lines the a 1,2-diacyl-sn-glycero-3-phospho-(1D-myo-inositol) pocket; the sequence is KLNK. Position 83 is an N6-succinyllysine (lysine 83). Lysine 278 serves as a coordination point for a 1,2-diacyl-sn-glycero-3-phospho-(1D-myo-inositol). Disordered regions lie at residues 310–330, 376–407, and 462–526; these read REEK…KKKR, DQER…AKQA, and ELKT…RVKK. The span at 376–400 shows a compositional bias: basic and acidic residues; that stretch reads DQERKRAKEEAERLEKERRAAEEAK. The segment covering 469-480 has biased composition (pro residues); that stretch reads APPPPPPPPVIP. Basic and acidic residues-rich tracts occupy residues 483–492 and 506–525; these read ENEHDEHDEN and MNHR…ERVK. Threonine 564 carries the phosphothreonine; by ROCK2 modification.

Binds NHERF1. Interacts with NHERF1, NHERF2, LAYN, MME/NEP and ICAM2. Interacts with CPNE1 (via VWFA domain) and CPNE4 (via VWFA domain). Interacts (via FERM domain) with SPN/CD43 cytoplasmic tail. Interacts with CD44. Interacts with CLIC5; may work together in a complex which also includes EZR and MYO6 to stabilize linkages between the plasma membrane and subjacent actin cytoskeleton at the base of stereocilia. Post-translationally, phosphorylated by tyrosine-protein kinases. Phosphorylation by ROCK2 suppresses the head-to-tail association of the N-terminal and C-terminal halves resulting in an opened conformation which is capable of actin and membrane-binding.

It localises to the cell membrane. It is found in the cytoplasm. The protein localises to the cytoskeleton. Its subcellular location is the cleavage furrow. The protein resides in the cell projection. It localises to the microvillus. It is found in the stereocilium. A head-to-tail association, of the N-terminal and C-terminal halves results in a closed conformation (inactive form) which is incapable of actin or membrane-binding. Functionally, probably plays a crucial role in the binding of the barbed end of actin filaments to the plasma membrane. The chain is Radixin (RDX) from Homo sapiens (Human).